We begin with the raw amino-acid sequence, 89 residues long: uncharacterized protein (89 aa).

A helical membrane pass occupies residues Ser-20–Ile-39.

It is found in the membrane. This is an uncharacterized protein from Escherichia coli (strain K12).